Here is a 313-residue protein sequence, read N- to C-terminus: MASVVTITLNAAYDLVGRLNRIQLGEVNTVETLGLFPAGKGINVAKVLKDLGVNVAVGGFLGKDNSADFEQMFNQHGLEDKFHRVDGKTRINVKITETEADVTDLNFLGYQISPQVWQQFVTDSLAYCLNYDIVAVCGSLPRGVSPELFADWLNQLHQAGVKVVLDSSNAALTAGLKAKPWLVKPNHRELEAWVGHPLNSLEEIIAAAQQLKAEGIENVIISMGAKGSLWINNEGVLKAEPAQCENVVSTVGAGDSMVAGLIYGFEKGLSKTETLAFATAVSAFAVSQSNVGVSDLSLLDPILEKVQITMIEG.

ATP contacts are provided by residues 222–227 (SMGAKG) and 254–255 (GD). The active-site Proton acceptor is Asp-255.

It belongs to the carbohydrate kinase PfkB family.

It catalyses the reaction beta-D-fructose 1-phosphate + ATP = beta-D-fructose 1,6-bisphosphate + ADP + H(+). Its function is as follows. Catalyzes the ATP-dependent phosphorylation of fructose-l-phosphate to fructose-l,6-bisphosphate. This Haemophilus influenzae (strain ATCC 51907 / DSM 11121 / KW20 / Rd) protein is 1-phosphofructokinase (fruK).